The primary structure comprises 486 residues: Cardiolipin synthase A (486 aa).

2 consecutive transmembrane segments (helical) span residues 3-23 (IFYNLIKCLIFSTYWLLIANI) and 38-58 (MSWLLTIYIIPFIGISIWFFF). 2 consecutive PLD phosphodiesterase domains span residues 219–246 (VDVRQHRKIILIDNYIAYSGSMNLVDPY) and 399–426 (QKGLLHSKSILVDQQLSLIGTVNLDMRS). Active-site residues include histidine 224, lysine 226, aspartate 231, histidine 404, lysine 406, and aspartate 411.

This sequence belongs to the phospholipase D family. Cardiolipin synthase subfamily. ClsA sub-subfamily.

It is found in the cell inner membrane. The catalysed reaction is 2 a 1,2-diacyl-sn-glycero-3-phospho-(1'-sn-glycerol) = a cardiolipin + glycerol. In terms of biological role, catalyzes the reversible phosphatidyl group transfer from one phosphatidylglycerol molecule to another to form cardiolipin (CL) (diphosphatidylglycerol) and glycerol. This Buchnera aphidicola subsp. Acyrthosiphon pisum (strain APS) (Acyrthosiphon pisum symbiotic bacterium) protein is Cardiolipin synthase A.